A 448-amino-acid polypeptide reads, in one-letter code: Probable D-serine dehydratase (448 aa).

Residue Lys-111 is modified to N6-(pyridoxal phosphate)lysine.

Belongs to the serine/threonine dehydratase family. DsdA subfamily. Pyridoxal 5'-phosphate serves as cofactor.

The enzyme catalyses D-serine = pyruvate + NH4(+). This is Probable D-serine dehydratase from Rhizobium etli (strain CIAT 652).